Consider the following 345-residue polypeptide: Calcium/calmodulin-dependent protein kinase type 1 (345 aa).

The disordered stretch occupies residues 1-23 (MPLFGSKKETAKKSSKKDKDEGK). Residues 31–287 (YILKDLLGTG…CKQALGHPWI (257 aa)) form the Protein kinase domain. ATP-binding positions include 37–45 (LGTGAFSQV) and Lys61. Asp153 functions as the Proton acceptor in the catalytic mechanism. The tract at residues 287 to 327 (ISGNAASTENIHSSVSEQLKKNFAKSRWRQAYHATAVIRQM) is autoinhibitory domain. The calmodulin-binding stretch occupies residues 307–328 (KNFAKSRWRQAYHATAVIRQMR).

This sequence belongs to the protein kinase superfamily. CAMK Ser/Thr protein kinase family. CaMK subfamily. In terms of tissue distribution, highly expressed in hepatopancreas and to a lesser extent in gills. Low expression in hemocytes, testis, ovary, heart, eyestalk, muscle and epidermis.

The catalysed reaction is L-seryl-[protein] + ATP = O-phospho-L-seryl-[protein] + ADP + H(+). It carries out the reaction L-threonyl-[protein] + ATP = O-phospho-L-threonyl-[protein] + ADP + H(+). With respect to regulation, activated by Ca(2+)/calmodulin. Binding of calmodulin results in conformational change that relieves intrasteric autoinhibition. In terms of biological role, calcium/calmodulin-dependent protein kinase that operates in the calcium-triggered CaMKK-CaMK1 signaling cascade and, upon calcium influx, regulates transcription activators activity, cell cycle, hormone production, cell differentiation, actin filament organization and neurite outgrowth. Involved in molting. This is Calcium/calmodulin-dependent protein kinase type 1 from Macrobrachium nipponense (Oriental river shrimp).